The chain runs to 127 residues: Large-conductance mechanosensitive channel (127 aa).

The next 2 helical transmembrane spans lie at 14-34 (VLDLAVGVIIGGAFTGLVKSL) and 69-89 (GAFLNDVINFLITAFVVFLIV).

The protein belongs to the MscL family. As to quaternary structure, homopentamer.

It is found in the cell membrane. Channel that opens in response to stretch forces in the membrane lipid bilayer. May participate in the regulation of osmotic pressure changes within the cell. The protein is Large-conductance mechanosensitive channel of Leuconostoc mesenteroides subsp. mesenteroides (strain ATCC 8293 / DSM 20343 / BCRC 11652 / CCM 1803 / JCM 6124 / NCDO 523 / NBRC 100496 / NCIMB 8023 / NCTC 12954 / NRRL B-1118 / 37Y).